Reading from the N-terminus, the 190-residue chain is Segregation and condensation protein B (190 aa).

It belongs to the ScpB family. Homodimer. Homodimerization may be required to stabilize the binding of ScpA to the Smc head domains. Component of a cohesin-like complex composed of ScpA, ScpB and the Smc homodimer, in which ScpA and ScpB bind to the head domain of Smc. The presence of the three proteins is required for the association of the complex with DNA.

The protein localises to the cytoplasm. Functionally, participates in chromosomal partition during cell division. May act via the formation of a condensin-like complex containing Smc and ScpA that pull DNA away from mid-cell into both cell halves. This chain is Segregation and condensation protein B, found in Bacillus cereus (strain G9842).